Consider the following 967-residue polypeptide: Sodium/potassium exporting P-type ATPase 1 (967 aa).

The Cytoplasmic segment spans residues 1-70; sequence MEGSGDKRHE…GVNPWKILLR (70 aa). The chain crosses the membrane as a helical span at residues 71 to 91; it reads QVSNGLTAVLVVAMVVSFAVK. A topological domain (extracellular) is located at residue Asp-92. The helical transmembrane segment at 93 to 113 threads the bilayer; sequence YAEAGVLVIVIAFNTIVGFVQ. At 114-254 the chain is on the cytoplasmic side; the sequence is EYRAEKTMDA…TQSTPMQRKL (141 aa). The helical transmembrane segment at 255-275 threads the bilayer; that stretch reads NLMAYMLLAFALLLALIVFAV. At 276 to 283 the chain is on the extracellular side; the sequence is NKFNFSTE. Asn-279 carries N-linked (GlcNAc...) asparagine glycosylation. A helical transmembrane segment spans residues 284–304; that stretch reads VVIYAIALSIAIIPEGLIAVI. Residues 305–732 are Cytoplasmic-facing; sequence TIVQALGVRR…GRRIFSNIKK (428 aa). Asp-340 acts as the 4-aspartylphosphate intermediate in catalysis. Mg(2+) contacts are provided by Asp-340 and Thr-342. ATP contacts are provided by Thr-342, Glu-425, Lys-478, Arg-523, Thr-587, Gly-588, Asp-589, Arg-651, and Lys-657. Asp-676 serves as a coordination point for Mg(2+). Residue Asn-679 participates in ATP binding. The helical transmembrane segment at 733–753 threads the bilayer; the sequence is FVLHLLSTNVGQVIVLLIGLA. At 754–812 the chain is on the extracellular side; sequence FKDRTGTSVFPLSPVQILFLNLVTGTPPAMALGIEPASSSVMQVPPHVKGLFTVELIMD. Residues 813–833 traverse the membrane as a helical segment; that stretch reads IFIFGTFIGILALASWVLVIY. Over 834-900 the chain is Cytoplasmic; that stretch reads PFGNSDLATL…GGASRFFSNK (67 aa). The chain crosses the membrane as a helical span at residues 901 to 921; that stretch reads VLVASVFIGALLPIPTIYIGT. The Extracellular segment spans residues 922 to 931; that stretch reads LNTEVFKQEG. Residues 932-952 traverse the membrane as a helical segment; the sequence is ITWEWIIVIVSVFVFFLLSEF. Topologically, residues 953–967 are cytoplasmic; sequence YKLLKRRFIKTPYNM.

Belongs to the cation transport ATPase (P-type) (TC 3.A.3) family. Type IID subfamily. Mg(2+) is required as a cofactor. Post-translationally, the active site is phosphorylated in presence of sodium or potassium and in conditions of higher pH. Not phosphorylated in presence of calcium ions.

It localises to the cell membrane. It catalyses the reaction Na(+)(in) + ATP + H2O = Na(+)(out) + ADP + phosphate + H(+). It carries out the reaction K(+)(in) + ATP + H2O = K(+)(out) + ADP + phosphate + H(+). In terms of biological role, catalyzes the hydrolysis of ATP coupled with the export of sodium and potassium from the cell. May pump potassium inefficiently. May transport other cations such as lithium. Sodium/potassium efflux ATPases are involved in salt tolerance and maintaining the membrane potential across the plasma membrane in high salinity (Na+) or alkaline (K+) environments. In Physcomitrium patens (Spreading-leaved earth moss), this protein is Sodium/potassium exporting P-type ATPase 1.